Consider the following 658-residue polypeptide: Threonine--tRNA ligase (658 aa).

In terms of domain architecture, TGS spans 1 to 64 (MSCSVSLSFP…GQSGQIEIIT (64 aa)). The tract at residues 246 to 549 (DHRRLGREMD…LIENFAGHMP (304 aa)) is catalytic. Residues C343, H394, and H526 each coordinate Zn(2+).

The protein belongs to the class-II aminoacyl-tRNA synthetase family. Homodimer. Zn(2+) is required as a cofactor.

Its subcellular location is the cytoplasm. It catalyses the reaction tRNA(Thr) + L-threonine + ATP = L-threonyl-tRNA(Thr) + AMP + diphosphate + H(+). Its function is as follows. Catalyzes the attachment of threonine to tRNA(Thr) in a two-step reaction: L-threonine is first activated by ATP to form Thr-AMP and then transferred to the acceptor end of tRNA(Thr). Also edits incorrectly charged L-seryl-tRNA(Thr). This Bartonella quintana (strain Toulouse) (Rochalimaea quintana) protein is Threonine--tRNA ligase.